The chain runs to 236 residues: Large ribosomal subunit protein uL3 (236 aa).

The span at 139 to 149 (SVSHRSHGSTG) shows a compositional bias: low complexity. The disordered stretch occupies residues 139–165 (SVSHRSHGSTGQRQDPGKVFKGKKMAG). Glutamine 152 bears the N5-methylglutamine mark.

Belongs to the universal ribosomal protein uL3 family. As to quaternary structure, part of the 50S ribosomal subunit. Forms a cluster with proteins L14 and L19. Methylated by PrmB.

In terms of biological role, one of the primary rRNA binding proteins, it binds directly near the 3'-end of the 23S rRNA, where it nucleates assembly of the 50S subunit. This chain is Large ribosomal subunit protein uL3, found in Pelagibacter ubique (strain HTCC1062).